Reading from the N-terminus, the 281-residue chain is Probable feruloyl esterase A (281 aa).

Positions 1 to 21 are cleaved as a signal peptide; sequence MKQFSAKFALALSAAAGQALA. Cystine bridges form between Cys50–Cys279, Cys112–Cys115, and Cys248–Cys255. A substrate-binding site is contributed by Asp98. N-linked (GlcNAc...) asparagine glycosylation occurs at Asn100. Residue Tyr101 coordinates substrate. The active-site Nucleophile is Ser154. Residue Asn173 is glycosylated (N-linked (GlcNAc...) asparagine). Asp215 (charge relay system) is an active-site residue. His268 contributes to the substrate binding site. His268 (charge relay system) is an active-site residue.

Belongs to the AB hydrolase superfamily. FaeA family.

The protein resides in the secreted. It catalyses the reaction feruloyl-polysaccharide + H2O = ferulate + polysaccharide.. Functionally, involved in degradation of plant cell walls. Hydrolyzes the feruloyl-arabinose ester bond in arabinoxylans, and the feruloyl-galactose ester bond in pectin. This Aspergillus terreus (strain NIH 2624 / FGSC A1156) protein is Probable feruloyl esterase A (faeA).